The following is a 194-amino-acid chain: Type II secretion system protein H (194 aa).

The propeptide at 1-6 (MTATRG) is leader sequence. Residue F7 is modified to N-methylphenylalanine. A helical membrane pass occupies residues 12–32 (ILLVLVLVSASAVAVIATFPV).

It belongs to the GSP H family. As to quaternary structure, type II secretion is composed of four main components: the outer membrane complex, the inner membrane complex, the cytoplasmic secretion ATPase and the periplasm-spanning pseudopilus. Interacts with core component EpsG. Post-translationally, cleaved by prepilin peptidase. Methylated by prepilin peptidase at the amino group of the N-terminal phenylalanine once the leader sequence is cleaved by prepilin peptidase.

The protein localises to the cell inner membrane. In terms of biological role, component of the type II secretion system required for the energy-dependent secretion of extracellular factors such as proteases and toxins from the periplasm. Part of the pseudopilus tip complex that is critical for the recognition and binding of secretion substrates. This chain is Type II secretion system protein H (epsH), found in Vibrio cholerae serotype O1 (strain ATCC 39315 / El Tor Inaba N16961).